The primary structure comprises 173 residues: Large ribosomal subunit protein uL10 (173 aa).

This sequence belongs to the universal ribosomal protein uL10 family. Part of the ribosomal stalk of the 50S ribosomal subunit. The N-terminus interacts with L11 and the large rRNA to form the base of the stalk. The C-terminus forms an elongated spine to which L12 dimers bind in a sequential fashion forming a multimeric L10(L12)X complex.

Functionally, forms part of the ribosomal stalk, playing a central role in the interaction of the ribosome with GTP-bound translation factors. The protein is Large ribosomal subunit protein uL10 of Myxococcus xanthus (strain DK1622).